The chain runs to 335 residues: UPF0353 protein BCG_1543 (335 aa).

A run of 2 helical transmembrane segments spans residues 18-38 (WFFL…LMQL) and 67-87 (VPAI…AGPT). Residues 98-294 (VVMLVIDVSQ…AELRAVYSSL (197 aa)) form the VWFA domain. The helical transmembrane segment at 309–329 (VGWLRLGALALALAALAALLI) threads the bilayer.

The protein belongs to the UPF0353 family.

Its subcellular location is the cell membrane. The polypeptide is UPF0353 protein BCG_1543 (Mycobacterium bovis (strain BCG / Pasteur 1173P2)).